The chain runs to 161 residues: Anaerobic nitrite reductase HB2 (161 aa).

The 150-residue stretch at 5–154 (VFTEKQEALV…LALAIKAEMK (150 aa)) folds into the Globin domain. The Homodimerization motif lies at 38-42 (EIAPA). Heme b contacts are provided by serine 48, lysine 62, histidine 66, and histidine 101. The short motif at 108–120 (DPHFEVVKEALVR) is the Homodimerization element.

The protein belongs to the plant globin family. As to quaternary structure, homodimer. Heme b serves as cofactor.

The protein localises to the cytoplasm. It localises to the nucleus. It catalyses the reaction Fe(III)-heme b-[protein] + nitric oxide + H2O = Fe(II)-heme b-[protein] + nitrite + 2 H(+). In terms of biological role, phytoglobin that reduces nitrite to nitric oxide (NO) under anoxic conditions (e.g. during flooding or in waterlogged soil). May not function as an oxygen storage or transport protein. Has an unusually high affinity for O(2) through an hexacoordinate heme iron because of a very low dissociation constant. The protein is Anaerobic nitrite reductase HB2 of Brassica napus (Rape).